Consider the following 166-residue polypeptide: NAD(P)H-quinone oxidoreductase subunit I, chloroplastic (166 aa).

2 consecutive 4Fe-4S ferredoxin-type domains span residues 55 to 84 (GRIH…VDWK) and 95 to 124 (LNYS…MTEE). 8 residues coordinate [4Fe-4S] cluster: Cys-64, Cys-67, Cys-70, Cys-74, Cys-104, Cys-107, Cys-110, and Cys-114.

The protein belongs to the complex I 23 kDa subunit family. As to quaternary structure, NDH is composed of at least 16 different subunits, 5 of which are encoded in the nucleus. Requires [4Fe-4S] cluster as cofactor.

It localises to the plastid. It is found in the chloroplast thylakoid membrane. The catalysed reaction is a plastoquinone + NADH + (n+1) H(+)(in) = a plastoquinol + NAD(+) + n H(+)(out). It catalyses the reaction a plastoquinone + NADPH + (n+1) H(+)(in) = a plastoquinol + NADP(+) + n H(+)(out). In terms of biological role, NDH shuttles electrons from NAD(P)H:plastoquinone, via FMN and iron-sulfur (Fe-S) centers, to quinones in the photosynthetic chain and possibly in a chloroplast respiratory chain. The immediate electron acceptor for the enzyme in this species is believed to be plastoquinone. Couples the redox reaction to proton translocation, and thus conserves the redox energy in a proton gradient. This Chaetymenia peduncularis (Daisy) protein is NAD(P)H-quinone oxidoreductase subunit I, chloroplastic.